Here is a 465-residue protein sequence, read N- to C-terminus: Phospholipase A1-II 5 (465 aa).

The active-site Acyl-ester intermediate is Ser233. Residues Ser233, Asp297, and His336 each act as charge relay system in the active site.

Belongs to the AB hydrolase superfamily. Lipase family.

Its subcellular location is the cytoplasm. Its function is as follows. Acylhydrolase that catalyzes the hydrolysis of phospholipids at the sn-1 position. The protein is Phospholipase A1-II 5 of Oryza sativa subsp. japonica (Rice).